Here is a 353-residue protein sequence, read N- to C-terminus: Nicotinate-nucleotide--dimethylbenzimidazole phosphoribosyltransferase (353 aa).

Residue Glu-318 is the Proton acceptor of the active site.

This sequence belongs to the CobT family.

The catalysed reaction is 5,6-dimethylbenzimidazole + nicotinate beta-D-ribonucleotide = alpha-ribazole 5'-phosphate + nicotinate + H(+). It participates in nucleoside biosynthesis; alpha-ribazole biosynthesis; alpha-ribazole from 5,6-dimethylbenzimidazole: step 1/2. Functionally, catalyzes the synthesis of alpha-ribazole-5'-phosphate from nicotinate mononucleotide (NAMN) and 5,6-dimethylbenzimidazole (DMB). This chain is Nicotinate-nucleotide--dimethylbenzimidazole phosphoribosyltransferase, found in Chloroflexus aggregans (strain MD-66 / DSM 9485).